Consider the following 228-residue polypeptide: MYSIKMRASHEDIHISGAETMCEFEDLENYLKKYFNKAFNHENGNIDFLNLKIEKVKAPIQTLVALPVVENLNDTLTQLAKQTGVSEYALNKGLEFIKNDITYTGAIILSAQTGQRLDSTEQRGIRVTQLAFKTCKCNGEISERVKDARALATCINAFEGVKAELCVSDDLHYTTGYFASPKLGYRRIFNIKEKGTRHGGRIIFVDEGINLNAYVSFLETVPKEIIEK.

The protein belongs to the BioW family. Homodimer. It depends on Mg(2+) as a cofactor.

It catalyses the reaction heptanedioate + ATP + CoA = 6-carboxyhexanoyl-CoA + AMP + diphosphate. It participates in metabolic intermediate metabolism; pimeloyl-CoA biosynthesis; pimeloyl-CoA from pimelate: step 1/1. Catalyzes the transformation of pimelate into pimeloyl-CoA with concomitant hydrolysis of ATP to AMP. This is 6-carboxyhexanoate--CoA ligase from Staphylococcus epidermidis (strain ATCC 35984 / DSM 28319 / BCRC 17069 / CCUG 31568 / BM 3577 / RP62A).